Here is a 347-residue protein sequence, read N- to C-terminus: 3-isopropylmalate dehydrogenase (347 aa).

76–87 (GPKWTDPNNRPE) is a binding site for NAD(+). Residues Arg94, Arg104, Arg132, and Asp217 each contribute to the substrate site. Mg(2+) is bound by residues Asp217, Asp241, and Asp245. An NAD(+)-binding site is contributed by 275 to 287 (GSAPDIANEDKAN).

This sequence belongs to the isocitrate and isopropylmalate dehydrogenases family. LeuB type 1 subfamily. Homodimer. Requires Mg(2+) as cofactor. Mn(2+) is required as a cofactor.

It localises to the cytoplasm. The catalysed reaction is (2R,3S)-3-isopropylmalate + NAD(+) = 4-methyl-2-oxopentanoate + CO2 + NADH. Its pathway is amino-acid biosynthesis; L-leucine biosynthesis; L-leucine from 3-methyl-2-oxobutanoate: step 3/4. Its function is as follows. Catalyzes the oxidation of 3-carboxy-2-hydroxy-4-methylpentanoate (3-isopropylmalate) to 3-carboxy-4-methyl-2-oxopentanoate. The product decarboxylates to 4-methyl-2 oxopentanoate. The sequence is that of 3-isopropylmalate dehydrogenase from Staphylococcus epidermidis (strain ATCC 12228 / FDA PCI 1200).